We begin with the raw amino-acid sequence, 129 residues long: Ig lambda-1 chain V regions MOPC 104E/RPC20/J558/S104 (129 aa).

The first 19 residues, 1–19 (MAWISLILSLLALSSGAIS), serve as a signal peptide directing secretion. Gln-20 is modified (pyrrolidone carboxylic acid). Positions 20 to 125 (QAVVTQESAL…HWVFGGGTKL (106 aa)) constitute an Ig-like domain.

In Mus musculus (Mouse), this protein is Ig lambda-1 chain V regions MOPC 104E/RPC20/J558/S104.